The primary structure comprises 303 residues: Inosose dehydratase (303 aa).

Belongs to the IolE/MocC family. The cofactor is glutathione. Requires Co(2+) as cofactor. It depends on Mn(2+) as a cofactor.

It catalyses the reaction scyllo-inosose = 3D-3,5/4-trihydroxycyclohexane-1,2-dione + H2O. It functions in the pathway polyol metabolism; myo-inositol degradation into acetyl-CoA; acetyl-CoA from myo-inositol: step 2/7. Its function is as follows. Catalyzes the dehydration of inosose (2-keto-myo-inositol, 2KMI or 2,4,6/3,5-pentahydroxycyclohexanone) to 3D-(3,5/4)-trihydroxycyclohexane-1,2-dione (D-2,3-diketo-4-deoxy-epi-inositol). The chain is Inosose dehydratase from Halalkalibacterium halodurans (strain ATCC BAA-125 / DSM 18197 / FERM 7344 / JCM 9153 / C-125) (Bacillus halodurans).